A 627-amino-acid chain; its full sequence is Chaperone protein DnaK (627 aa).

Phosphothreonine; by autocatalysis is present on threonine 197. Residues 598–611 (AYAKEQGGQQGAAD) show a composition bias toward low complexity. The interval 598–627 (AYAKEQGGQQGAADAGKKADDDDVIDAEVE) is disordered. Acidic residues predominate over residues 618-627 (DDDVIDAEVE).

Belongs to the heat shock protein 70 family.

In terms of biological role, acts as a chaperone. This is Chaperone protein DnaK from Sulfurovum sp. (strain NBC37-1).